Here is a 336-residue protein sequence, read N- to C-terminus: Formimidoylglutamase (336 aa).

Residues 1–10 (MNPNFTTEHT) are compositionally biased toward polar residues. A disordered region spans residues 1-22 (MNPNFTTEHTWQGRHDPEDGQA). A compositionally biased stretch (basic and acidic residues) spans 11–22 (WQGRHDPEDGQA). Mn(2+) contacts are provided by histidine 127, aspartate 157, histidine 159, aspartate 161, aspartate 254, and aspartate 256.

The protein belongs to the arginase family. Requires Mn(2+) as cofactor.

The catalysed reaction is N-formimidoyl-L-glutamate + H2O = formamide + L-glutamate. Its pathway is amino-acid degradation; L-histidine degradation into L-glutamate; L-glutamate from N-formimidoyl-L-glutamate (hydrolase route): step 1/1. Its function is as follows. Catalyzes the conversion of N-formimidoyl-L-glutamate to L-glutamate and formamide. This is Formimidoylglutamase from Vibrio cholerae serotype O1 (strain ATCC 39541 / Classical Ogawa 395 / O395).